The primary structure comprises 188 residues: Ribosome-recycling factor (188 aa).

It belongs to the RRF family.

The protein resides in the cytoplasm. Functionally, responsible for the release of ribosomes from messenger RNA at the termination of protein biosynthesis. May increase the efficiency of translation by recycling ribosomes from one round of translation to another. The polypeptide is Ribosome-recycling factor (Blochmanniella floridana).